A 264-amino-acid polypeptide reads, in one-letter code: Probable glycerol uptake facilitator protein (264 aa).

2 helical membrane passes run 13-33 and 51-71; these read WIGA…GAGS and TAAF…NSLF. An NPA 1 motif is present at residues 78 to 80; sequence NPA. The next 3 helical transmembrane spans lie at 104-124, 162-182, and 195-215; these read IPLL…GAML, FATE…AGSF, and VPML…GTAI. An NPA 2 motif is present at residues 216–218; that stretch reads NPA. The chain crosses the membrane as a helical span at residues 244-264; sequence IPVAAPLSASVILGVLVAVIV.

Belongs to the MIP/aquaporin (TC 1.A.8) family.

It localises to the cell membrane. The enzyme catalyses glycerol(in) = glycerol(out). Its function is as follows. Mediates glycerol diffusion across the cytoplasmic membrane via a pore-type mechanism. The protein is Probable glycerol uptake facilitator protein (glpF) of Mycoplasma pneumoniae (strain ATCC 29342 / M129 / Subtype 1) (Mycoplasmoides pneumoniae).